The chain runs to 469 residues: MAQTLYDKLWNSHVVHTEEDGTALLYIDRQLLHEVTSPQAFEGLKLAQRPVWRISANLAVSDHNVPTTDRSHGIADPVSKLQVDTLDANCDAYGITQFKMNDVRQGIVHIIGPEQGATLPGMTIVCGDSHTSTHGAFGALAHGIGTSEVEHVLATQTLLQKKSKNMLVKVEGQLPRGCTAKDIVLAIIGRIGTAGGTGYAIEFGGSTIRALTMEGRMTVCNMAIEAGARAGMVAVDDTTVEYLKGRPFVPTGAEWDQAVEYWKTFRSDEGAQFDRVVELDAAQIVPQVTWGTSPEMVTSIDGRVPDPEREKDPVKRDAMERALAYMALAPNTPIEAIKVDKIFIGSCTNARIEDIRAAAYVVKKLNRRVAPNVRLAMVVPGSGLVKAQAEREGLDKVFTEAGFEWREPGCSMCLAMNADRLEPGERCASTSNRNFEGRQGQGGRTHLVSPAMAAAAAIEGHFVDIRRLG.

[4Fe-4S] cluster-binding residues include Cys-347, Cys-410, and Cys-413.

Belongs to the aconitase/IPM isomerase family. LeuC type 1 subfamily. In terms of assembly, heterodimer of LeuC and LeuD. [4Fe-4S] cluster is required as a cofactor.

The catalysed reaction is (2R,3S)-3-isopropylmalate = (2S)-2-isopropylmalate. Its pathway is amino-acid biosynthesis; L-leucine biosynthesis; L-leucine from 3-methyl-2-oxobutanoate: step 2/4. Catalyzes the isomerization between 2-isopropylmalate and 3-isopropylmalate, via the formation of 2-isopropylmaleate. The protein is 3-isopropylmalate dehydratase large subunit of Burkholderia pseudomallei (strain 1106a).